We begin with the raw amino-acid sequence, 298 residues long: Pyridoxal 5'-phosphate synthase subunit PdxS (298 aa).

Residue Asp24 participates in D-ribose 5-phosphate binding. The active-site Schiff-base intermediate with D-ribose 5-phosphate is the Lys81. Position 153 (Gly153) interacts with D-ribose 5-phosphate. D-glyceraldehyde 3-phosphate is bound at residue Arg165. D-ribose 5-phosphate is bound by residues Gly214 and 235–236 (GS).

This sequence belongs to the PdxS/SNZ family. In the presence of PdxT, forms a dodecamer of heterodimers.

The enzyme catalyses aldehydo-D-ribose 5-phosphate + D-glyceraldehyde 3-phosphate + L-glutamine = pyridoxal 5'-phosphate + L-glutamate + phosphate + 3 H2O + H(+). It participates in cofactor biosynthesis; pyridoxal 5'-phosphate biosynthesis. Functionally, catalyzes the formation of pyridoxal 5'-phosphate from ribose 5-phosphate (RBP), glyceraldehyde 3-phosphate (G3P) and ammonia. The ammonia is provided by the PdxT subunit. Can also use ribulose 5-phosphate and dihydroxyacetone phosphate as substrates, resulting from enzyme-catalyzed isomerization of RBP and G3P, respectively. In Halalkalibacterium halodurans (strain ATCC BAA-125 / DSM 18197 / FERM 7344 / JCM 9153 / C-125) (Bacillus halodurans), this protein is Pyridoxal 5'-phosphate synthase subunit PdxS.